We begin with the raw amino-acid sequence, 278 residues long: 4-diphosphocytidyl-2-C-methyl-D-erythritol kinase (278 aa).

Lysine 9 is a catalytic residue. Residue 93 to 103 (PISAGLAGGSS) coordinates ATP. Aspartate 135 is an active-site residue.

It belongs to the GHMP kinase family. IspE subfamily.

It carries out the reaction 4-CDP-2-C-methyl-D-erythritol + ATP = 4-CDP-2-C-methyl-D-erythritol 2-phosphate + ADP + H(+). The protein operates within isoprenoid biosynthesis; isopentenyl diphosphate biosynthesis via DXP pathway; isopentenyl diphosphate from 1-deoxy-D-xylulose 5-phosphate: step 3/6. In terms of biological role, catalyzes the phosphorylation of the position 2 hydroxy group of 4-diphosphocytidyl-2C-methyl-D-erythritol. The polypeptide is 4-diphosphocytidyl-2-C-methyl-D-erythritol kinase (Finegoldia magna (strain ATCC 29328 / DSM 20472 / WAL 2508) (Peptostreptococcus magnus)).